The sequence spans 340 residues: S-adenosylmethionine:tRNA ribosyltransferase-isomerase (340 aa).

Belongs to the QueA family. As to quaternary structure, monomer.

The protein localises to the cytoplasm. It catalyses the reaction 7-aminomethyl-7-carbaguanosine(34) in tRNA + S-adenosyl-L-methionine = epoxyqueuosine(34) in tRNA + adenine + L-methionine + 2 H(+). The protein operates within tRNA modification; tRNA-queuosine biosynthesis. Transfers and isomerizes the ribose moiety from AdoMet to the 7-aminomethyl group of 7-deazaguanine (preQ1-tRNA) to give epoxyqueuosine (oQ-tRNA). This Francisella tularensis subsp. tularensis (strain FSC 198) protein is S-adenosylmethionine:tRNA ribosyltransferase-isomerase.